Reading from the N-terminus, the 113-residue chain is UPF0482 protein YnfB (113 aa).

The N-terminal stretch at 1–28 is a signal peptide; the sequence is MNILSGKLPFLLGAVFAGSVVLATSVQA.

The protein belongs to the UPF0482 family.

The protein is UPF0482 protein YnfB of Escherichia fergusonii (strain ATCC 35469 / DSM 13698 / CCUG 18766 / IAM 14443 / JCM 21226 / LMG 7866 / NBRC 102419 / NCTC 12128 / CDC 0568-73).